The chain runs to 366 residues: Chorismate synthase (366 aa).

Arg46 serves as a coordination point for NADP(+). FMN-binding positions include 122–124 (RSS), 243–244 (NG), Gly284, 299–303 (KPTPS), and Arg325.

It belongs to the chorismate synthase family. In terms of assembly, homotetramer. Requires FMNH2 as cofactor.

The catalysed reaction is 5-O-(1-carboxyvinyl)-3-phosphoshikimate = chorismate + phosphate. Its pathway is metabolic intermediate biosynthesis; chorismate biosynthesis; chorismate from D-erythrose 4-phosphate and phosphoenolpyruvate: step 7/7. Functionally, catalyzes the anti-1,4-elimination of the C-3 phosphate and the C-6 proR hydrogen from 5-enolpyruvylshikimate-3-phosphate (EPSP) to yield chorismate, which is the branch point compound that serves as the starting substrate for the three terminal pathways of aromatic amino acid biosynthesis. This reaction introduces a second double bond into the aromatic ring system. The sequence is that of Chorismate synthase from Campylobacter hominis (strain ATCC BAA-381 / DSM 21671 / CCUG 45161 / LMG 19568 / NCTC 13146 / CH001A).